Consider the following 537-residue polypeptide: Beta-1-syntrophin (537 aa).

At Ala2 the chain carries N-acetylalanine. PH domains lie at 18 to 297 (RAQR…SNAG) and 321 to 432 (EIRH…QGCH). 3 positions are modified to phosphoserine: Ser86, Ser125, and Ser204. Residues 111 to 194 (GVKVLKQELG…EVLLEVKYMR (84 aa)) form the PDZ domain. A disordered region spans residues 204–233 (SPVSEIGWETPPPESPRLGGGSAEPLSSQS). Thr213 carries the phosphothreonine modification. Phosphoserine occurs at positions 218, 225, 231, 235, and 388. One can recognise an SU domain in the interval 481-537 (PYEKLKMSSDDGIRMLYLDFGGKEGEIQLDLHSCPKPIVFIIHSFLSAKITRLGLVA). A calmodulin-binding region spans residues 517–537 (PIVFIIHSFLSAKITRLGLVA).

It belongs to the syntrophin family. Monomer and homodimer. Interacts with the viral HTLV-1 TAX protein and other members of the syntrophin family: SNTA1 and SNTB2. Interacts with the dystrophin protein DMD and related proteins DTNA and UTRN and with the sodium channel proteins SCN4A and SCN5A. Interacts with DTNB. Phosphorylated by CaM-kinase II. Ubiquitous. Expressed at high levels in the liver.

The protein resides in the cell membrane. Its subcellular location is the sarcolemma. It is found in the cell junction. The protein localises to the cytoplasm. It localises to the cytoskeleton. Functionally, adapter protein that binds to and probably organizes the subcellular localization of a variety of membrane proteins. May link various receptors to the actin cytoskeleton and the dystrophin glycoprotein complex. This is Beta-1-syntrophin (Sntb1) from Mus musculus (Mouse).